The sequence spans 576 residues: Adenine deaminase (576 aa).

The protein belongs to the metallo-dependent hydrolases superfamily. Adenine deaminase family. Mn(2+) is required as a cofactor.

The enzyme catalyses adenine + H2O + H(+) = hypoxanthine + NH4(+). The chain is Adenine deaminase from Bacillus pumilus (strain SAFR-032).